Consider the following 24-residue polypeptide: Ascaphin-6 (24 aa).

In terms of tissue distribution, expressed by the skin glands.

It localises to the secreted. Functionally, antimicrobial peptide that shows higher potency against Gram-negative bacteria than against Gram-positive bacteria. Has a very week hemolytic activity. The chain is Ascaphin-6 from Ascaphus truei (Coastal tailed frog).